Consider the following 765-residue polypeptide: Zinc metalloproteinase nas-37 (765 aa).

A signal peptide spans 1-22 (MKSQACLKVCLALIGLVSIVST). Residues 23–114 (AYIANDVVSD…SESNSPRSRR (92 aa)) constitute a propeptide that is removed on maturation. The 194-residue stretch at 115–308 (QAHPDPRNFW…AKMINTRYCS (194 aa)) folds into the Peptidase M12A domain. N126 carries N-linked (GlcNAc...) asparagine glycosylation. 6 disulfide bridges follow: C156–C307, C177–C196, C311–C331, C333–C342, C350–C374, and C400–C420. Residue H204 coordinates Zn(2+). E205 is a catalytic residue. Zn(2+) is bound by residues H208 and H214. The region spanning 303 to 343 (NTRYCSNVCQRSLPCLNEGYTDPNNCGRCRCPSGYGGTYCE) is the EGF-like domain. Residues 350–458 (CGGSLTASSS…RGFTLKYRAI (109 aa)) enclose the CUB domain. Residues 513-573 (KYSSEELYDP…TRPTPTTTVA (61 aa)) are disordered. 2 stretches are compositionally biased toward low complexity: residues 526–545 (LSPSSSSASPALLLPSDASP) and 562–573 (ALTRPTPTTTVA). Residues 576 to 627 (TASWSAWGEWSACSQPCGGCGTKTRVRACYGGNQVCPGSNLDRESCNAHACA) form the TSP type-1 domain. 3 cysteine pairs are disulfide-bonded: C588/C621, C592/C626, and C604/C611.

Zn(2+) is required as a cofactor. Expressed in hypodermal cells. Not expressed in the seam cells in L1 to L3 larvae, but it is present in seam cells of L4 larvae. Also expressed in attachment points of the cuticle at the anterior end of larvae, in the arcade cells in the mouth, the anterior pharynx, the amphid socket cells, and in the rectal epithelial cells at the posterior end of the larvae (at protein level).

Its subcellular location is the secreted. Its function is as follows. Metalloprotease. Plays an essential role in molting, a process during larval stages in which a new cuticle is formed and the old cuticle is shed. Required during ecdysis, the opening of the cuticle to allow the worm to escape. This Caenorhabditis elegans protein is Zinc metalloproteinase nas-37 (nas-37).